The primary structure comprises 320 residues: Mitochondrial glycine transporter (320 aa).

3 Solcar repeats span residues 8 to 92 (SKTT…LRQG), 121 to 205 (LSNW…LKRR), and 223 to 307 (SSSS…LILR). 6 helical membrane-spanning segments follow: residues 14 to 39 (FAAG…TRVQ), 67 to 93 (GTLP…RQGL), 127 to 152 (LATG…VRYE), 180 to 203 (GFGA…EQLK), 227 to 253 (INFV…KTRL), and 282 to 300 (GLGL…AWTV).

Belongs to the mitochondrial carrier (TC 2.A.29) family. SLC25A38 subfamily.

The protein localises to the mitochondrion inner membrane. It catalyses the reaction glycine(in) = glycine(out). Mitochondrial glycine transporter that imports glycine into the mitochondrial matrix. Plays an important role in providing glycine for the first enzymatic step in heme biosynthesis, the condensation of glycine with succinyl-CoA to produce 5-aminolevulinate (ALA) in the mitochondrial matrix. The chain is Mitochondrial glycine transporter from Aspergillus fumigatus (strain CBS 144.89 / FGSC A1163 / CEA10) (Neosartorya fumigata).